Consider the following 506-residue polypeptide: Dolichyl pyrophosphate Glc1Man9GlcNAc2 alpha-1,3-glucosyltransferase (506 aa).

The next 12 membrane-spanning stretches (helical) occupy residues 10-30 (RLLL…IPSS), 101-121 (VIYF…YGVY), 133-153 (NLIC…HIHF), 176-196 (LLGG…AVTA), 219-239 (LVTI…PFIY), 261-281 (YWAP…AVLL), 305-325 (PFAV…LLAI), 339-359 (GLVA…GWHV), 384-401 (HYFL…PLLY), 406-426 (YPIK…GFAA), 454-474 (YLMG…YFLG), and 479-499 (FLPL…SWIW).

It belongs to the ALG6/ALG8 glucosyltransferase family.

It localises to the endoplasmic reticulum membrane. It catalyses the reaction an alpha-D-Glc-(1-&gt;3)-alpha-D-Man-(1-&gt;2)-alpha-D-Man-(1-&gt;2)-alpha-D-Man-(1-&gt;3)-[alpha-D-Man-(1-&gt;2)-alpha-D-Man-(1-&gt;3)-[alpha-D-Man-(1-&gt;2)-alpha-D-Man-(1-&gt;6)]-alpha-D-Man-(1-&gt;6)]-beta-D-Man-(1-&gt;4)-beta-D-GlcNAc-(1-&gt;4)-alpha-D-GlcNAc-diphospho-di-trans,poly-cis-dolichol + a di-trans,poly-cis-dolichyl beta-D-glucosyl phosphate = an alpha-D-Glc-(1-&gt;3)-alpha-D-Glc-(1-&gt;3)-alpha-D-Man-(1-&gt;2)-alpha-D-Man-(1-&gt;2)-alpha-D-Man-(1-&gt;3)-[alpha-D-Man-(1-&gt;2)-alpha-D-Man-(1-&gt;3)-[alpha-D-Man-(1-&gt;2)-alpha-D-Man-(1-&gt;6)]-alpha-D-Man-(1-&gt;6)]-beta-D-Man-(1-&gt;4)-beta-D-GlcNAc-(1-&gt;4)-alpha-D-GlcNAc-diphospho-di-trans,poly-cis-dolichol + a di-trans,poly-cis-dolichyl phosphate + H(+). It functions in the pathway protein modification; protein glycosylation. Dolichyl pyrophosphate Glc1Man9GlcNAc2 alpha-1,3-glucosyltransferase that operates in the biosynthetic pathway of dolichol-linked oligosaccharides, the glycan precursors employed in protein asparagine (N)-glycosylation. The assembly of dolichol-linked oligosaccharides begins on the cytosolic side of the endoplasmic reticulum membrane and finishes in its lumen. The sequential addition of sugars to dolichol pyrophosphate produces dolichol-linked oligosaccharides containing fourteen sugars, including two GlcNAcs, nine mannoses and three glucoses. Once assembled, the oligosaccharide is transferred from the lipid to nascent proteins by oligosaccharyltransferases. In the lumen of the endoplasmic reticulum, adds the second glucose residue from dolichyl phosphate glucose (Dol-P-Glc) onto the lipid-linked oligosaccharide intermediate Glc(1)Man(9)GlcNAc(2)-PP-Dol to produce Glc(2)Man(9)GlcNAc(2)-PP-Dol. This chain is Dolichyl pyrophosphate Glc1Man9GlcNAc2 alpha-1,3-glucosyltransferase, found in Arabidopsis thaliana (Mouse-ear cress).